We begin with the raw amino-acid sequence, 4092 residues long: Dynein heavy chain, cytoplasmic (4092 aa).

A stem region spans residues 1–1757 (MCKNEARLAN…FISQSGYLLQ (1757 aa)). Coiled-coil stretches lie at residues 154–175 (VETIDKTRRKLDDISKQFQQLH), 486–508 (KLEQAESEFSKNMLDLEKKLQNT), 542–566 (KVLENQQILLLEIKKDIRQLETGLE), 932–959 (VIKLKDDIQNCIEQVQNLHCKINSYVKE), 1042–1063 (YERDARKLHEDMNRDREAVEDM), and 1681–1705 (KGLLDKLNKSSDNVKKKIEALLVEY). 4 AAA regions span residues 1758–1979 (YKFE…VLRN), 2036–2273 (QCLK…NDLV), 2379–2628 (SLEA…LVRG), and 2722–2984 (TFCD…KVGV). ATP is bound by residues 1796-1803 (GPAGTGKT), 2074-2081 (GKAGCGKT), 2418-2425 (GPPGSGKT), and 2760-2767 (GASRTGKT). Coiled-coil stretches lie at residues 2993 to 3092 (IDGL…KRKE), 3242 to 3300 (KTKA…KSLT), and 3532 to 3608 (ITLT…EEFF). Residues 2993–3300 (IDGLRALVKL…RSISLVKSLT (308 aa)) form a stalk region. AAA regions lie at residues 3370 to 3599 (LVTL…NIEK) and 3760 to 3970 (LNWF…YLEN).

This sequence belongs to the dynein heavy chain family. As to quaternary structure, the dynein complex consists of at least two heavy chains and a number of intermediate and light chains. Interacts with DYN3.

It localises to the cytoplasm. The protein localises to the cytoskeleton. Cytoplasmic dynein acts as a motor for the intracellular retrograde motility of vesicles and organelles along microtubules. Dynein has ATPase activity; the force-producing power stroke is thought to occur on release of ADP. Required to maintain uniform nuclear distribution in hyphae. May play an important role in the proper orientation of the mitotic spindle into the budding daughter cell yeast. Probably required for normal progression of the cell cycle. This Saccharomyces cerevisiae (strain ATCC 204508 / S288c) (Baker's yeast) protein is Dynein heavy chain, cytoplasmic (DYN1).